A 1956-amino-acid chain; its full sequence is Sodium channel protein type 10 subunit alpha (1956 aa).

The Cytoplasmic segment spans residues 1 to 125 (MEFPIGSLET…FNLIRRTAIK (125 aa)). The segment at 27-54 (QIAAKQGTKKAREKHREQKDQEEKPRPQ) is disordered. Residues 40-54 (KHREQKDQEEKPRPQ) are compositionally biased toward basic and acidic residues. Residues 116-405 (FNLIRRTAIK…VTMAYEEQNQ (290 aa)) form an I repeat. Residues 126 to 149 (VSVHSWFSLFITVTILVNCVCMTR) traverse the membrane as a helical segment. Residues 150-154 (TDLPE) are Extracellular-facing. Residues 155-174 (KIEYVFTVIYTFEALIKILA) traverse the membrane as a helical segment. Over 175 to 187 (RGFCLNEFTYLRD) the chain is Cytoplasmic. Residues 188–206 (PWNWLDFSVITLAYVGTAI) traverse the membrane as a helical segment. Residues 207-212 (DLRGIS) are Extracellular-facing. The chain crosses the membrane as a helical; Voltage-sensor span at residues 213-232 (GLRTFRVLRALKTVSVIPGL). The Cytoplasmic portion of the chain corresponds to 233-248 (KVIVGALIHSVKKLAD). Residues 249–272 (VTILTIFCLSVFALVGLQLFKGNL) form a helical membrane-spanning segment. Over 273–341 (KNKCVKNDMA…PDFNYTSFDS (69 aa)) the chain is Extracellular. The cysteines at positions 276 and 319 are disulfide-linked. N-linked (GlcNAc...) asparagine glycosylation is found at N284, N288, N312, and N335. The segment at residues 342 to 366 (FAWAFLSLFRLMTQDSWERLYQQTL) is an intramembrane region (pore-forming). Over 367-373 (RTSGKIY) the chain is Extracellular. A helical transmembrane segment spans residues 374 to 399 (MIFFVLVIFLGSFYLVNLILAVVTMA). At 400-659 (YEEQNQATTD…MWVKLKTILF (260 aa)) the chain is on the cytoplasmic side. Phosphoserine occurs at positions 441, 444, 467, and 479. Positions 443–454 (HSHNGSPLTSKN) are enriched in polar residues. 2 disordered regions span residues 443–485 (HSHN…YNQR) and 500–580 (SHGS…LAPG). Basic and acidic residues predominate over residues 561-570 (DSRHGEDEHQ). S612 and S615 each carry phosphoserine. An II repeat occupies 647-911 (CCPMWVKLKT…EDDGEVNNLQ (265 aa)). The helical transmembrane segment at 660–684 (GLVTDPFAELTITLCIVVNTIFMAM) threads the bilayer. At 685 to 695 (EHHGMSPTFEA) the chain is on the extracellular side. A helical transmembrane segment spans residues 696 to 719 (MLQIGNIVFTIFFTAEMVFKIIAF). Topologically, residues 720 to 727 (DPYYYFQK) are cytoplasmic. The helical transmembrane segment at 728 to 747 (KWNIFDCIIVTVSLLELGVA) threads the bilayer. Residues 748–753 (KKGSLS) lie on the Extracellular side of the membrane. A helical; Voltage-sensor transmembrane segment spans residues 754–773 (VLRSFRLLRVFKLAKSWPTL). The Cytoplasmic segment spans residues 774-789 (NTLIKIIGNSVGALGN). The chain crosses the membrane as a helical span at residues 790 to 810 (LTIILAIIVFVFALVGKQLLG). Over 811–834 (ENYRNNRKNISAPHEDWPRWHMHD) the chain is Extracellular. An N-linked (GlcNAc...) asparagine glycan is attached at N819. Residues 835–855 (FFHSFLIVFRILCGEWIENMW) constitute an intramembrane region (pore-forming). Topologically, residues 856-864 (ACMEVGQKS) are extracellular. C857 and C866 are disulfide-bonded. Residues 865 to 890 (ICLILFLTVMVLGNLVVLNLFIALLL) form a helical membrane-spanning segment. The Cytoplasmic portion of the chain corresponds to 891–1147 (NSFSADNLTA…GWQVRKTCYR (257 aa)). Disordered stretches follow at residues 963–986 (AANTARGSSGGLQAPRGPRDEHSD) and 1041–1089 (DHLT…GSTV). Residues 1140-1449 (QVRKTCYRIV…KKYYNAMKKL (310 aa)) form an III repeat. A helical membrane pass occupies residues 1148–1171 (IVEHSWFESFIIFMILLSSGSLAF). The Extracellular portion of the chain corresponds to 1172-1184 (EDYYLDQKPTVKA). Residues 1185 to 1210 (LLEYTDRVFTFIFVFEMLLKWVAYGF) traverse the membrane as a helical segment. Over 1211-1216 (KKYFTN) the chain is Cytoplasmic. A helical transmembrane segment spans residues 1217-1238 (AWCWLDFLIVNISLISLTAKIL). Residues 1239-1242 (EYSE) are Extracellular-facing. A helical; Voltage-sensor membrane pass occupies residues 1243–1264 (VAPIKALRTLRALRPLRALSRF). Residues 1265–1283 (EGMRVVVDALVGAIPSIMN) are Cytoplasmic-facing. Residues 1284-1311 (VLLVCLIFWLIFSIMGVNLFAGKFWRCI) form a helical membrane-spanning segment. Residues N1312, N1328, and N1336 are each glycosylated (N-linked (GlcNAc...) asparagine). Over 1312 to 1353 (NYTDGEFSLVPLSIVNNKSDCKIQNSTGSFFWVNVKVNFDNV) the chain is Extracellular. The pore-forming intramembrane region spans 1354–1375 (AMGYLALLQVATFKGWMDIMYA). Residues 1376–1391 (AVDSREVNMQPKWEDN) are Extracellular-facing. A helical transmembrane segment spans residues 1392–1418 (VYMYLYFVIFIIFGGFFTLNLFVGVII). At 1419 to 1471 (DNFNQQKKKLGGQDIFMTEEQKKYYNAMKKLGSKKPQKPIPRPLNKFQGFVFD) the chain is on the cytoplasmic side. A Phosphoserine; by PKC modification is found at S1451. One copy of the IV repeat lies at 1458 to 1757 (IPRPLNKFQG…WEKFDPEATQ (300 aa)). A helical membrane pass occupies residues 1472–1495 (IVTRQAFDITIMVLICLNMITMMV). Residues 1496–1506 (ETDDQSEEKTK) lie on the Extracellular side of the membrane. The chain crosses the membrane as a helical span at residues 1507–1530 (ILGKINQFFVAVFTGECVMKMFAL). Over 1531 to 1536 (RQYYFT) the chain is Cytoplasmic. A helical transmembrane segment spans residues 1537–1560 (NGWNVFDFIVVVLSIASLIFSAIL). Topologically, residues 1561-1572 (KSLQSYFSPTLF) are extracellular. Residues 1573-1594 (RVIRLARIGRILRLIRAAKGIR) form a helical; Voltage-sensor membrane-spanning segment. Residues 1595–1609 (TLLFALMMSLPALFN) are Cytoplasmic-facing. The chain crosses the membrane as a helical span at residues 1610 to 1632 (IGLLLFLVMFIYSIFGMSSFPHV). Topologically, residues 1633–1646 (RWEAGIDDMFNFQT) are extracellular. Residues 1647-1669 (FANSMLCLFQITTSAGWDGLLSP) constitute an intramembrane region (pore-forming). At 1670-1697 (ILNTGPPYCDPNLPNSNGTRGDCGSPAV) the chain is on the extracellular side. N-linked (GlcNAc...) asparagine glycosylation is present at N1686. The helical transmembrane segment at 1698-1722 (GIIFFTTYIIISFLIMVNMYIAVIL) threads the bilayer. Residues 1723–1956 (ENFNVATEES…TSMELIAPGP (234 aa)) are Cytoplasmic-facing. An IQ domain is found at 1851–1880 (EDISATVIQKAYRSYVLHRSMALSNTPCVP). The segment at 1909–1956 (SETASATSFPPSYESVTRGLSDRVNMRTSSSIQNEDEATSMELIAPGP) is disordered.

Belongs to the sodium channel (TC 1.A.1.10) family. Nav1.8/SCN10A subfamily. As to quaternary structure, the channel consists of an ion conducting pore forming alpha-subunit regulated by one or more associated auxiliary subunits SCN1B, SCN2B and SCN3B; electrophysiological properties may vary depending on the type of the associated beta subunits. Found in a number of complexes with PRX, DYNLT1 and PDZD2. Interacts with proteins such as FSTL1, PRX, DYNLT1, PDZD2, S100A10 and many others. Interacts with NEDD4 and NEDD4L. In terms of processing, ubiquitinated by NEDD4L; which promotes its endocytosis. Phosphorylation at Ser-1451 by PKC in a highly conserved cytoplasmic loop slows inactivation of the sodium channel and reduces peak sodium currents. Post-translationally, lacks the cysteine which covalently binds the conotoxin GVIIJ. This cysteine (position 816) is speculated in other sodium channel subunits alpha to be implied in covalent binding with the sodium channel subunit beta-2 or beta-4. Expressed in the dorsal root ganglia and sciatic nerve.

It localises to the cell membrane. It carries out the reaction Na(+)(in) = Na(+)(out). In terms of biological role, tetrodotoxin-resistant channel that mediates the voltage-dependent sodium ion permeability of excitable membranes. Assuming opened or closed conformations in response to the voltage difference across the membrane, the protein forms a sodium-selective channel through which sodium ions may pass in accordance with their electrochemical gradient. Plays a role in neuropathic pain mechanisms. This is Sodium channel protein type 10 subunit alpha from Homo sapiens (Human).